Here is a 912-residue protein sequence, read N- to C-terminus: Vomeronasal type-2 receptor 1 (912 aa).

Positions M1–G21 are cleaved as a signal peptide. Residues A22–T623 are Extracellular-facing. 4 N-linked (GlcNAc...) asparagine glycosylation sites follow: N24, N38, N299, and N386. Residues L624 to I644 form a helical membrane-spanning segment. The Cytoplasmic segment spans residues H645–E657. Residues L658–G678 traverse the membrane as a helical segment. Topologically, residues K679–T691 are extracellular. A helical transmembrane segment spans residues L692–F712. Over A713–K732 the chain is Cytoplasmic. The chain crosses the membrane as a helical span at residues L733–E753. At P754 to E778 the chain is on the extracellular side. The chain crosses the membrane as a helical span at residues F779–F799. Topologically, residues V800–K812 are cytoplasmic. Residues C813–L833 traverse the membrane as a helical segment. Over S834 to K840 the chain is Extracellular. The helical transmembrane segment at V841–L861 threads the bilayer. The Cytoplasmic segment spans residues P862 to E912.

This sequence belongs to the G-protein coupled receptor 3 family. As to expression, expressed at the sensory surface of the vomeronasal organ.

It localises to the cell membrane. In terms of biological role, putative pheromone receptor. This Mus musculus (Mouse) protein is Vomeronasal type-2 receptor 1 (Vmn2r1).